We begin with the raw amino-acid sequence, 134 residues long: MNELVRGLTNLRSLRAAVRELTLEQAENALEKLQTAIEEKRANEAELIKAETERKERLAKYKELMEKEGITPEELHEIFGTKTVSIRAKRAPRPAKYAFIDENGEHKTWTGQGRTPRPIQNALNKGKSLSDFEI.

The segment at 106-134 (HKTWTGQGRTPRPIQNALNKGKSLSDFEI) is disordered. Residues 112 to 117 (QGRTPR) mediate DNA binding.

Belongs to the histone-like protein H-NS family. Homodimer that oligomerizes on DNA into higher-order complexes that form bridges between disparate regions of DNA compacting it.

It is found in the cytoplasm. Its subcellular location is the nucleoid. Its function is as follows. A DNA-binding protein implicated in transcriptional repression and chromosome organization and compaction. Binds nucleation sites in AT-rich DNA and bridges them, forming higher-order nucleoprotein complexes and condensing the chromosome. As many horizontally transferred genes are AT-rich, it plays a central role in silencing foreign genes. A subset of genes are repressed by H-NS in association with other proteins. The chain is DNA-binding protein H-NS homolog (hns) from Haemophilus influenzae (strain ATCC 51907 / DSM 11121 / KW20 / Rd).